Reading from the N-terminus, the 320-residue chain is MKPLNVIFAGTPDFAARHLQALINSEHNVIAVYSRADKPAGRGKKLQASPVKMLALENEIPVYQPTSLRDEQAQAELASLNADIMVVVAYGLILPKVVLDTPKLGCINVHGSILPRWRGAAPIQRALWSGDTETGVTIMQMDIGLDTGDMLLKTQLPIEDSDTSASLYEKLAEQGPEALVEALTGLAKGELAAEKQDEALANYAEKLSKEEAELDWNKSAAQLWREIRAFNPWPISHFSHQDASIKVREAHVSQSKSQAPAGTIISAGKEGIEIATGDGVLTLLNMQLPGKKPLSVADILNSRSEWFTPGTVLNSTKEAE.

Position 112 to 115 (112 to 115 (SILP)) interacts with (6S)-5,6,7,8-tetrahydrofolate.

Belongs to the Fmt family.

It catalyses the reaction L-methionyl-tRNA(fMet) + (6R)-10-formyltetrahydrofolate = N-formyl-L-methionyl-tRNA(fMet) + (6S)-5,6,7,8-tetrahydrofolate + H(+). Functionally, attaches a formyl group to the free amino group of methionyl-tRNA(fMet). The formyl group appears to play a dual role in the initiator identity of N-formylmethionyl-tRNA by promoting its recognition by IF2 and preventing the misappropriation of this tRNA by the elongation apparatus. In Shewanella woodyi (strain ATCC 51908 / MS32), this protein is Methionyl-tRNA formyltransferase.